The primary structure comprises 151 residues: UPF0178 protein Swoo_1444 (151 aa).

The protein belongs to the UPF0178 family.

The protein is UPF0178 protein Swoo_1444 of Shewanella woodyi (strain ATCC 51908 / MS32).